Here is a 269-residue protein sequence, read N- to C-terminus: Monofunctional glycosyltransferase (269 aa).

A helical membrane pass occupies residues 46–66 (ILLTILIIIALFIGIMYFLST).

The protein belongs to the glycosyltransferase 51 family.

The protein localises to the cell membrane. The enzyme catalyses [GlcNAc-(1-&gt;4)-Mur2Ac(oyl-L-Ala-gamma-D-Glu-L-Lys-D-Ala-D-Ala)](n)-di-trans,octa-cis-undecaprenyl diphosphate + beta-D-GlcNAc-(1-&gt;4)-Mur2Ac(oyl-L-Ala-gamma-D-Glu-L-Lys-D-Ala-D-Ala)-di-trans,octa-cis-undecaprenyl diphosphate = [GlcNAc-(1-&gt;4)-Mur2Ac(oyl-L-Ala-gamma-D-Glu-L-Lys-D-Ala-D-Ala)](n+1)-di-trans,octa-cis-undecaprenyl diphosphate + di-trans,octa-cis-undecaprenyl diphosphate + H(+). Its pathway is cell wall biogenesis; peptidoglycan biosynthesis. Functionally, peptidoglycan polymerase that catalyzes glycan chain elongation using lipid-linked disaccharide-pentapeptide as the substrate. The protein is Monofunctional glycosyltransferase of Staphylococcus aureus (strain Newman).